The following is a 644-amino-acid chain: CTP synthase (644 aa).

Positions 300–551 (SIAIVGKYTK…LGLILASVDR (252 aa)) constitute a Glutamine amidotransferase type-1 domain. Catalysis depends on for GATase activity residues cysteine 399, histidine 527, and glutamate 529.

This sequence belongs to the CTP synthase family.

The catalysed reaction is UTP + L-glutamine + ATP + H2O = CTP + L-glutamate + ADP + phosphate + 2 H(+). Its pathway is pyrimidine metabolism; CTP biosynthesis via de novo pathway; CTP from UDP: step 2/2. Functionally, catalyzes the ATP-dependent amination of UTP to CTP with either L-glutamine or ammonia as the source of nitrogen. Constitutes the rate-limiting enzyme in the synthesis of cytosine nucleotides. The protein is CTP synthase of Drosophila pseudoobscura pseudoobscura (Fruit fly).